The primary structure comprises 610 residues: Elongation factor 4 (610 aa).

The 183-residue stretch at 7 to 189 (SRIRNFSIIA…AIVQRIPPPK (183 aa)) folds into the tr-type G domain. Residues 19 to 24 (DHGKST) and 136 to 139 (NKID) each bind GTP.

The protein belongs to the TRAFAC class translation factor GTPase superfamily. Classic translation factor GTPase family. LepA subfamily.

The protein resides in the cell inner membrane. It carries out the reaction GTP + H2O = GDP + phosphate + H(+). Required for accurate and efficient protein synthesis under certain stress conditions. May act as a fidelity factor of the translation reaction, by catalyzing a one-codon backward translocation of tRNAs on improperly translocated ribosomes. Back-translocation proceeds from a post-translocation (POST) complex to a pre-translocation (PRE) complex, thus giving elongation factor G a second chance to translocate the tRNAs correctly. Binds to ribosomes in a GTP-dependent manner. The chain is Elongation factor 4 from Thermus thermophilus (strain ATCC BAA-163 / DSM 7039 / HB27).